The sequence spans 340 residues: Heat-inducible transcription repressor HrcA (340 aa).

Belongs to the HrcA family.

Functionally, negative regulator of class I heat shock genes (grpE-dnaK-dnaJ and groELS operons). Prevents heat-shock induction of these operons. The chain is Heat-inducible transcription repressor HrcA from Mycoplasmopsis synoviae (strain 53) (Mycoplasma synoviae).